Reading from the N-terminus, the 146-residue chain is MSMSTSTEVVAHHWAFAIFLIVAIGLCCLMLIGGWFLGGRARARHKNTPFESGIDSVGTARLRLSAKFYLVAMFFVIFDVEALYLFAWSTSIRESGWVGFVEAAIFILVLLAGLVYLVRIGALDWTPTRSRRELVNPENSNSNRQQ.

3 helical membrane passes run 16–36 (FAIF…GGWF), 68–88 (FYLV…LFAW), and 98–118 (VGFV…VYLV).

This sequence belongs to the complex I subunit 3 family. NDH-1 is composed of 13 different subunits. Subunits NuoA, H, J, K, L, M, N constitute the membrane sector of the complex.

It localises to the cell inner membrane. The catalysed reaction is a quinone + NADH + 5 H(+)(in) = a quinol + NAD(+) + 4 H(+)(out). Its function is as follows. NDH-1 shuttles electrons from NADH, via FMN and iron-sulfur (Fe-S) centers, to quinones in the respiratory chain. The immediate electron acceptor for the enzyme in this species is believed to be ubiquinone. Couples the redox reaction to proton translocation (for every two electrons transferred, four hydrogen ions are translocated across the cytoplasmic membrane), and thus conserves the redox energy in a proton gradient. This Enterobacter sp. (strain 638) protein is NADH-quinone oxidoreductase subunit A.